A 591-amino-acid polypeptide reads, in one-letter code: V-type ATP synthase alpha chain (591 aa).

242-249 (GPFGAGKT) serves as a coordination point for ATP.

This sequence belongs to the ATPase alpha/beta chains family.

It carries out the reaction ATP + H2O + 4 H(+)(in) = ADP + phosphate + 5 H(+)(out). Functionally, produces ATP from ADP in the presence of a proton gradient across the membrane. The V-type alpha chain is a catalytic subunit. This is V-type ATP synthase alpha chain from Chlamydia trachomatis serovar L2 (strain ATCC VR-902B / DSM 19102 / 434/Bu).